The chain runs to 862 residues: Protein SEY1 (862 aa).

The Cytoplasmic segment spans residues 1–747 (MVSNGHFASA…KRSAIGGMTQ (747 aa)). One can recognise a GB1/RHD3-type G domain in the interval 49–306 (GFNYHLISVF…IPADGFAVYA (258 aa)). Residue 59 to 66 (GSQSTGKS) participates in GTP binding. Positions 481–507 (SNYTQELALYQKDLEKISAQLRKDEMR) form a coiled coil. Residues 748 to 768 (IPVYFYILLLALGWNEIVAVL) traverse the membrane as a helical segment. Topologically, residues 769 to 771 (RNP) are lumenal. Residues 772–792 (LYFFMLFLCAVGAFVTYQLNL) traverse the membrane as a helical segment. Over 793–862 (WGPMIKMAEA…DDDDEDEGSW (70 aa)) the chain is Cytoplasmic. A disordered region spans residues 819 to 862 (LEPSEAGPHAARYKNSTEEYEMSNVKAPQRTNSGDDDDEDEGSW). Residues 852 to 862 (GDDDDEDEGSW) show a composition bias toward acidic residues.

It belongs to the TRAFAC class dynamin-like GTPase superfamily. GB1/RHD3 GTPase family. RHD3 subfamily.

It is found in the endoplasmic reticulum membrane. Functionally, cooperates with the reticulon proteins and tubule-shaping DP1 family proteins to generate and maintain the structure of the tubular endoplasmic reticulum network. Has GTPase activity, which is required for its function in ER organization. The protein is Protein SEY1 of Uncinocarpus reesii (strain UAMH 1704).